We begin with the raw amino-acid sequence, 262 residues long: Acyl-[acyl-carrier-protein]--UDP-N-acetylglucosamine O-acyltransferase (262 aa).

It belongs to the transferase hexapeptide repeat family. LpxA subfamily. Homotrimer.

Its subcellular location is the cytoplasm. It carries out the reaction a (3R)-hydroxyacyl-[ACP] + UDP-N-acetyl-alpha-D-glucosamine = a UDP-3-O-[(3R)-3-hydroxyacyl]-N-acetyl-alpha-D-glucosamine + holo-[ACP]. It functions in the pathway glycolipid biosynthesis; lipid IV(A) biosynthesis; lipid IV(A) from (3R)-3-hydroxytetradecanoyl-[acyl-carrier-protein] and UDP-N-acetyl-alpha-D-glucosamine: step 1/6. Functionally, involved in the biosynthesis of lipid A, a phosphorylated glycolipid that anchors the lipopolysaccharide to the outer membrane of the cell. The polypeptide is Acyl-[acyl-carrier-protein]--UDP-N-acetylglucosamine O-acyltransferase (Pectobacterium atrosepticum (strain SCRI 1043 / ATCC BAA-672) (Erwinia carotovora subsp. atroseptica)).